We begin with the raw amino-acid sequence, 314 residues long: MQREKVAVIIGPTAVGKTKLSIDLAKALNGEIISGDSMQIYRTMDIGTAKVTKEEMDGIPHYMVDIKNPEESFSVAEFQERVRKHIREITERGKLPIIVGGTGLYIQSVLFDYQFTDDAGDAIYREQMEKLALERGVEYVHKKLQEVDPESAERIHANNVRRVIRALEIFHTSGEKMSDQLEKQENELLYDVSLIGLTMDREMLYDRINLRVDIMMDQGLLEEVEGLYNRGIRDCQSIQAIGYKEIYDYFEDRVSLEEAVSQLKTNSRRYAKRQLTWFRNKMDVTWFDVTDGEKTSEILRYIEGKLQLKSNNSK.

11 to 18 (GPTAVGKT) contributes to the ATP binding site. A substrate-binding site is contributed by 13–18 (TAVGKT). Positions 36–39 (DSMQ) are interaction with substrate tRNA.

It belongs to the IPP transferase family. Monomer. Mg(2+) is required as a cofactor.

The catalysed reaction is adenosine(37) in tRNA + dimethylallyl diphosphate = N(6)-dimethylallyladenosine(37) in tRNA + diphosphate. Its function is as follows. Catalyzes the transfer of a dimethylallyl group onto the adenine at position 37 in tRNAs that read codons beginning with uridine, leading to the formation of N6-(dimethylallyl)adenosine (i(6)A). The chain is tRNA dimethylallyltransferase from Bacillus anthracis.